The sequence spans 306 residues: Agmatinase (306 aa).

His-126, Asp-149, His-151, Asp-153, Asp-230, and Asp-232 together coordinate Mn(2+).

The protein belongs to the arginase family. Agmatinase subfamily. Mn(2+) serves as cofactor.

It catalyses the reaction agmatine + H2O = urea + putrescine. It participates in amine and polyamine biosynthesis; putrescine biosynthesis via agmatine pathway; putrescine from agmatine: step 1/1. Its function is as follows. Catalyzes the formation of putrescine from agmatine. In Shigella boydii serotype 18 (strain CDC 3083-94 / BS512), this protein is Agmatinase.